Here is a 595-residue protein sequence, read N- to C-terminus: DNA primase (595 aa).

A CHC2-type zinc finger spans residues 38–62 (CPFHQEKTPSFTVSDSKRFFYCFGC). The region spanning 250–332 (NHSILVEGYF…EKKISFIRLP (83 aa)) is the Toprim domain. 3 residues coordinate Mg(2+): Glu-256, Asp-300, and Asp-302.

Belongs to the DnaG primase family. Monomer. Interacts with DnaB. The cofactor is Zn(2+). It depends on Mg(2+) as a cofactor.

The catalysed reaction is ssDNA + n NTP = ssDNA/pppN(pN)n-1 hybrid + (n-1) diphosphate.. In terms of biological role, RNA polymerase that catalyzes the synthesis of short RNA molecules used as primers for DNA polymerase during DNA replication. This Rickettsia felis (strain ATCC VR-1525 / URRWXCal2) (Rickettsia azadi) protein is DNA primase.